The following is a 688-amino-acid chain: Probable glucan endo-1,3-beta-glucosidase btgC (688 aa).

Disordered stretches follow at residues 1 to 91 (MSGP…NLGP), 126 to 148 (ANIP…PEPP), and 168 to 195 (GQLT…IPYQ). Topologically, residues 1-307 (MSGPNRTYSF…PKPGGGNKKR (307 aa)) are cytoplasmic. Residues 175-188 (SVSHLSSTNPSQRN) are compositionally biased toward polar residues. The chain crosses the membrane as a helical; Signal-anchor for type II membrane protein span at residues 308 to 328 (GWIVGAILAFIIIGAIVGGAV). The Extracellular segment spans residues 329-688 (GGTIGHRGNE…IPDCGGKTAT (360 aa)). The segment at 334 to 363 (HRGNEEPSSASSASSSSTQTATEDTSVNGD) is disordered. A compositionally biased stretch (low complexity) spans 341–355 (SSASSASSSSTQTAT). Asparagine 408, asparagine 431, and asparagine 459 each carry an N-linked (GlcNAc...) asparagine glycan. Glutamate 491 acts as the Proton donor in catalysis. Glutamate 590 acts as the Nucleophile in catalysis. N-linked (GlcNAc...) asparagine glycosylation is found at asparagine 609 and asparagine 635.

This sequence belongs to the glycosyl hydrolase 17 family.

The protein resides in the cell membrane. It carries out the reaction Hydrolysis of (1-&gt;3)-beta-D-glucosidic linkages in (1-&gt;3)-beta-D-glucans.. Functionally, glucanases play a role in cell expansion during growth, in cell-cell fusion during mating, and in spore release during sporulation. This enzyme may be involved in beta-glucan degradation. Active on laminarin and lichenan. The sequence is that of Probable glucan endo-1,3-beta-glucosidase btgC (btgC) from Aspergillus fumigatus (strain ATCC MYA-4609 / CBS 101355 / FGSC A1100 / Af293) (Neosartorya fumigata).